Consider the following 309-residue polypeptide: Olfactory receptor 1A2 (309 aa).

The Extracellular segment spans residues M1–N25. A glycan (N-linked (GlcNAc...) asparagine) is linked at N5. Residues V26–I49 traverse the membrane as a helical segment. Residues C50–N57 lie on the Cytoplasmic side of the membrane. Residues P58–P79 traverse the membrane as a helical segment. The Extracellular portion of the chain corresponds to K80 to Q100. A disulfide bond links C97 and C189. The chain crosses the membrane as a helical span at residues M101–Y120. The Cytoplasmic portion of the chain corresponds to D121 to R139. The helical transmembrane segment at S140–P158 threads the bilayer. Residues H159 to N195 are Extracellular-facing. The chain crosses the membrane as a helical span at residues V196–V218. Residues Q219–K235 are Cytoplasmic-facing. The helical transmembrane segment at A236–Y258 threads the bilayer. Residues F259 to A270 are Extracellular-facing. The helical transmembrane segment at V271 to L290 threads the bilayer. At R291–S309 the chain is on the cytoplasmic side.

The protein belongs to the G-protein coupled receptor 1 family.

The protein resides in the cell membrane. In terms of biological role, odorant receptor. The polypeptide is Olfactory receptor 1A2 (OR1A2) (Homo sapiens (Human)).